The sequence spans 128 residues: Glycine cleavage system H protein (128 aa).

The Lipoyl-binding domain maps to 24-106 (VYTVGITEHA…YAEGFLFQIK (83 aa)). Lys-65 is subject to N6-lipoyllysine.

Belongs to the GcvH family. As to quaternary structure, the glycine cleavage system is composed of four proteins: P, T, L and H. The cofactor is (R)-lipoate.

Its function is as follows. The glycine cleavage system catalyzes the degradation of glycine. The H protein shuttles the methylamine group of glycine from the P protein to the T protein. The chain is Glycine cleavage system H protein from Serratia proteamaculans (strain 568).